A 412-amino-acid chain; its full sequence is NADH-quinone oxidoreductase subunit D (412 aa).

The protein belongs to the complex I 49 kDa subunit family. As to quaternary structure, NDH-1 is composed of at least 14 different subunits, Nqo1 to Nqo14. The complex has a L-shaped structure, with the hydrophobic arm (subunits Nqo7, Nqo8, Nqo10 to Nqo14) embedded in the inner membrane and the hydrophilic peripheral arm (subunits Nqo1 to Nqo6, Nqo9) protruding into the bacterial cytoplasm. The hydrophilic domain contains all the redox centers. NADH-quinone oxidoreductase forms a supercomplex with ubiquinol-cytochrome c reductase complex (complex III or cytochrome b-c1 complex) and cytochrome c oxidase (complex IV), which stabilizes the NADH-quinone oxidoreductase complex.

Its subcellular location is the cell inner membrane. The catalysed reaction is a quinone + NADH + 5 H(+)(in) = a quinol + NAD(+) + 4 H(+)(out). NDH-1 shuttles electrons from NADH, via FMN and iron-sulfur (Fe-S) centers, to quinones in the respiratory chain. The immediate electron acceptor for the enzyme in this species is believed to be ubiquinone. Couples the redox reaction to proton translocation (for every two electrons transferred, four hydrogen ions are translocated across the cytoplasmic membrane), and thus conserves the redox energy in a proton gradient. The polypeptide is NADH-quinone oxidoreductase subunit D (nuoD) (Paracoccus denitrificans (strain Pd 1222)).